The chain runs to 762 residues: Ribosome-releasing factor 2, mitochondrial (762 aa).

Residues 1–35 (MLLSLTFPVLRGCTGHLVNRSLQAPRWRVTWKRSY) constitute a mitochondrion transit peptide. The 288-residue stretch at 54-341 (SKIRNIGIMA…AITAYLPAPN (288 aa)) folds into the tr-type G domain. GTP-binding positions include 63-70 (AHIDAGKT), 127-131 (DTPGH), and 181-184 (NKMD).

Belongs to the TRAFAC class translation factor GTPase superfamily. Classic translation factor GTPase family. EF-G/EF-2 subfamily.

The protein resides in the mitochondrion. The catalysed reaction is GTP + H2O = GDP + phosphate + H(+). Its function is as follows. Mitochondrial GTPase that mediates the disassembly of ribosomes from messenger RNA at the termination of mitochondrial protein biosynthesis. Acts in collaboration with mrrf. GTP hydrolysis follows the ribosome disassembly and probably occurs on the ribosome large subunit. Not involved in the GTP-dependent ribosomal translocation step during translation elongation. The sequence is that of Ribosome-releasing factor 2, mitochondrial (gfm2) from Danio rerio (Zebrafish).